Here is a 369-residue protein sequence, read N- to C-terminus: Histidinol-phosphate aminotransferase 2 (369 aa).

At K231 the chain carries N6-(pyridoxal phosphate)lysine.

The protein belongs to the class-II pyridoxal-phosphate-dependent aminotransferase family. Histidinol-phosphate aminotransferase subfamily. In terms of assembly, homodimer. Requires pyridoxal 5'-phosphate as cofactor.

The enzyme catalyses L-histidinol phosphate + 2-oxoglutarate = 3-(imidazol-4-yl)-2-oxopropyl phosphate + L-glutamate. Its pathway is amino-acid biosynthesis; L-histidine biosynthesis; L-histidine from 5-phospho-alpha-D-ribose 1-diphosphate: step 7/9. The sequence is that of Histidinol-phosphate aminotransferase 2 from Legionella pneumophila subsp. pneumophila (strain Philadelphia 1 / ATCC 33152 / DSM 7513).